The chain runs to 359 residues: Ornithine cyclodeaminase (359 aa).

L-ornithine contacts are provided by Arg53 and Lys77. Residues Thr92, Arg120, 147–148 (AQ), Asp169, Thr209, 232–235 (VGGD), Lys239, and Ser300 contribute to the NAD(+) site. Arg120 contributes to the L-ornithine binding site. L-ornithine is bound at residue Asp235. Asp235 (proton donor/acceptor) is an active-site residue. Val301 lines the L-ornithine pocket.

It belongs to the ornithine cyclodeaminase/mu-crystallin family. Requires NAD(+) as cofactor.

It catalyses the reaction L-ornithine = L-proline + NH4(+). It participates in amino-acid biosynthesis; L-proline biosynthesis; L-proline from L-ornithine: step 1/1. In terms of biological role, catalyzes the conversion of L-ornithine into L-proline with release of ammonia. The protein is Ornithine cyclodeaminase of Brucella melitensis biotype 1 (strain ATCC 23456 / CCUG 17765 / NCTC 10094 / 16M).